The following is a 467-amino-acid chain: Methylenetetrahydrofolate--tRNA-(uracil-5-)-methyltransferase TrmFO (467 aa).

11 to 16 is a binding site for FAD; the sequence is GAGLAG.

Belongs to the MnmG family. TrmFO subfamily. FAD serves as cofactor.

It localises to the cytoplasm. It carries out the reaction uridine(54) in tRNA + (6R)-5,10-methylene-5,6,7,8-tetrahydrofolate + NADH + H(+) = 5-methyluridine(54) in tRNA + (6S)-5,6,7,8-tetrahydrofolate + NAD(+). It catalyses the reaction uridine(54) in tRNA + (6R)-5,10-methylene-5,6,7,8-tetrahydrofolate + NADPH + H(+) = 5-methyluridine(54) in tRNA + (6S)-5,6,7,8-tetrahydrofolate + NADP(+). In terms of biological role, catalyzes the folate-dependent formation of 5-methyl-uridine at position 54 (M-5-U54) in all tRNAs. The chain is Methylenetetrahydrofolate--tRNA-(uracil-5-)-methyltransferase TrmFO from Prochlorococcus marinus (strain MIT 9303).